Here is a 382-residue protein sequence, read N- to C-terminus: Cell division protein FtsZ (382 aa).

GTP is bound by residues 21–25 (GGGNN), 108–110 (GTG), Glu139, Arg143, and Asp187. Residues 320–382 (KDVTKPQRPS…TFLRNRNKRG (63 aa)) form a disordered region. Over residues 326-341 (QRPSLNQSIKTHNQSV) the composition is skewed to polar residues. Residues 342 to 351 (PKREPKREEP) are compositionally biased toward basic and acidic residues. Positions 352–365 (QQQNTVSRHTSQPA) are enriched in polar residues.

Belongs to the FtsZ family. In terms of assembly, homodimer. Polymerizes to form a dynamic ring structure in a strictly GTP-dependent manner. Interacts directly with several other division proteins. Interacts with FtsA. Interacts with Phi29 DNA replication protein 1. Interacts with the cell division inhibitor MciZ.

The protein resides in the cytoplasm. Its activity is regulated as follows. During sporulation, is negatively regulated by MciZ, which binds to FtsZ and inhibits its polymerization and the formation of the Z ring. Its function is as follows. Essential cell division protein that forms a contractile ring structure (Z ring) at the future cell division site. The regulation of the ring assembly controls the timing and the location of cell division. One of the functions of the FtsZ ring is to recruit other cell division proteins to the septum to produce a new cell wall between the dividing cells. Binds GTP and shows GTPase activity. In Bacillus subtilis (strain 168), this protein is Cell division protein FtsZ.